Here is a 419-residue protein sequence, read N- to C-terminus: uncharacterized protein (419 aa).

7 consecutive transmembrane segments (helical) span residues 16-36 (IMAKSFIISTVITVLLVLVVT), 186-206 (LVYIMLFVIYFSVIMYASMIA), 235-255 (LLGIGLVGITQLAIIIGAGSL), 283-303 (VIYAVIFFLLGYFLYATLAAF), 318-338 (ITPMTLLVVAGFMIAMFGLNA), 340-360 (DAGFITVTSFIPFFTPMIMFL), and 369-389 (FWQAAVGIGITLLTIVILAVI).

To M.jannaschii MJ1024.

Its subcellular location is the cell membrane. This is an uncharacterized protein from Bacillus subtilis (strain 168).